The sequence spans 781 residues: Zinc finger protein klf1 (781 aa).

C2H2-type zinc fingers lie at residues 17-41 and 47-70; these read YKCD…FRSH and FICP…NQKH.

Its subcellular location is the nucleus. The protein resides in the cytoplasm. The protein localises to the cytoskeleton. It localises to the spindle. Functionally, required for maintaining cell viability in nitrogen-deficient stationary phase (G0) cells. The sequence is that of Zinc finger protein klf1 (klf1) from Schizosaccharomyces pombe (strain 972 / ATCC 24843) (Fission yeast).